Consider the following 227-residue polypeptide: Urease accessory protein UreF (227 aa).

This sequence belongs to the UreF family. In terms of assembly, ureD, UreF and UreG form a complex that acts as a GTP-hydrolysis-dependent molecular chaperone, activating the urease apoprotein by helping to assemble the nickel containing metallocenter of UreC. The UreE protein probably delivers the nickel.

Its subcellular location is the cytoplasm. In terms of biological role, required for maturation of urease via the functional incorporation of the urease nickel metallocenter. This is Urease accessory protein UreF from Actinobacillus pleuropneumoniae serotype 5b (strain L20).